The following is a 389-amino-acid chain: 26S proteasome non-ATPase regulatory subunit 6 (389 aa).

Residues 193–361 (DFKQAAELFL…EIVETNRPDS (169 aa)) form the PCI domain.

It belongs to the proteasome subunit S10 family. In terms of assembly, component of the 19S proteasome regulatory particle complex. The 26S proteasome consists of a 20S core particle (CP) and two 19S regulatory subunits (RP). The regulatory particle is made of a lid composed of 9 subunits including PSMD6, a base containing 6 ATPases and few additional components.

Component of the 26S proteasome, a multiprotein complex involved in the ATP-dependent degradation of ubiquitinated proteins. This complex plays a key role in the maintenance of protein homeostasis by removing misfolded or damaged proteins, which could impair cellular functions, and by removing proteins whose functions are no longer required. Therefore, the proteasome participates in numerous cellular processes, including cell cycle progression, apoptosis, or DNA damage repair. The chain is 26S proteasome non-ATPase regulatory subunit 6 (Psmd6) from Mus musculus (Mouse).